The following is a 266-amino-acid chain: Glucosamine-6-phosphate deaminase (266 aa).

D72 acts as the Proton acceptor; for enolization step in catalysis. The active-site For ring-opening step is D141. H143 serves as the catalytic Proton acceptor; for ring-opening step. E148 functions as the For ring-opening step in the catalytic mechanism.

Belongs to the glucosamine/galactosamine-6-phosphate isomerase family. NagB subfamily. Homohexamer.

The catalysed reaction is alpha-D-glucosamine 6-phosphate + H2O = beta-D-fructose 6-phosphate + NH4(+). It participates in amino-sugar metabolism; N-acetylneuraminate degradation; D-fructose 6-phosphate from N-acetylneuraminate: step 5/5. Its activity is regulated as follows. Allosterically activated by N-acetylglucosamine 6-phosphate (GlcNAc6P). Catalyzes the reversible isomerization-deamination of glucosamine 6-phosphate (GlcN6P) to form fructose 6-phosphate (Fru6P) and ammonium ion. This is Glucosamine-6-phosphate deaminase from Vibrio cholerae serotype O1 (strain ATCC 39541 / Classical Ogawa 395 / O395).